Reading from the N-terminus, the 521-residue chain is Importin subunit alpha-3 (521 aa).

Ala2 carries the post-translational modification N-acetylalanine. In terms of domain architecture, IBB spans 2–58 (ADNEKLDNQRLKNFKNKGRDLETMRRQRNEVVVELRKNKRDEHLLKRRNVPQEDICE). The Nuclear localization signal motif lies at 43 to 52 (EHLLKRRNVP). Ser60 is subject to Phosphoserine. An ARM 1; truncated repeat occupies 66 to 106 (YRVQNTSLEAIVQNASSDNQGIQLSAVQAARKLLSSDRNPP). 8 ARM repeats span residues 107 to 149 (IDDL…TSEQ), 150 to 194 (TQAV…CRDY), 195 to 233 (VISL…HKDP), 234 to 278 (PPPM…EQIQ), 279 to 318 (MVID…TDEQ), 319 to 360 (TQVV…NQQQ), 361 to 400 (VQAV…ISGR), and 401 to 443 (KDQV…KMAE). Positions 137-229 (WALTNIASGT…VTWVMVNLCR (93 aa)) are NLS binding site (major). The segment at 306 to 394 (RAVGNIVTGT…QKEAAWAISN (89 aa)) is NLS binding site (minor). The stretch at 447 to 485 (ETIANLIEECGGLEKIEQLQNHENEDIYKLAYEIIDQFF) is one ARM 10; atypical repeat.

It belongs to the importin alpha family. Forms a complex with importin subunit beta-1 (KPNB1). Interacts with SNAI1. Interacts with TALDO1 isoform 1. Interacts with CYB1. As to expression, detected more or less in all tissues examined (Ehrlich ascites tumor cells, testis, kidney, spleen, liver, heart, lung, thymus, skeletal muscle, cerebellum and brain (without cerebellum)). Multiple-sized transcripts were highly expressed, especially in testis.

Its subcellular location is the cytoplasm. It is found in the nucleus. Functionally, functions in nuclear protein import as an adapter protein for nuclear receptor KPNB1. Binds specifically and directly to substrates containing either a simple or bipartite NLS motif. Docking of the importin/substrate complex to the nuclear pore complex (NPC) is mediated by KPNB1 through binding to nucleoporin FxFG repeats and the complex is subsequently translocated through the pore by an energy requiring, Ran-dependent mechanism. At the nucleoplasmic side of the NPC, Ran binds to importin-beta and the three components separate and importin-alpha and -beta are re-exported from the nucleus to the cytoplasm where GTP hydrolysis releases Ran from importin. The directionality of nuclear import is thought to be conferred by an asymmetric distribution of the GTP- and GDP-bound forms of Ran between the cytoplasm and nucleus. Mediates nuclear import of AARS1, MRTFA and RANBP3. In Mus musculus (Mouse), this protein is Importin subunit alpha-3 (Kpna4).